The sequence spans 374 residues: Cell division protein C (374 aa).

The region spanning 11-73 (ARKYAINAVK…YKRRIEVLKE (63 aa)) is the MIT domain. 144–151 (GPPGCGKT) contacts ATP.

It belongs to the AAA ATPase family. In terms of assembly, interacts with CdvB.

Its subcellular location is the cytoplasm. The protein localises to the nucleoid. Part of a cell division machinery. The CdvA, CdvB and CdvC proteins polymerize between segregating nucleoids and persist throughout cell division, forming a successively smaller structure during constriction. This Sulfolobus acidocaldarius (strain ATCC 33909 / DSM 639 / JCM 8929 / NBRC 15157 / NCIMB 11770) protein is Cell division protein C.